A 396-amino-acid polypeptide reads, in one-letter code: Enoyl-[acyl-carrier-protein] reductase [NADH] (396 aa).

NAD(+) is bound by residues 48–53 (GASTGY), 74–75 (FE), 111–112 (DA), and 139–140 (LA). Residue tyrosine 225 participates in substrate binding. The active-site Proton donor is the tyrosine 235. Residues lysine 244 and 273-275 (VVT) each bind NAD(+).

It belongs to the TER reductase family. Monomer.

The enzyme catalyses a 2,3-saturated acyl-[ACP] + NAD(+) = a (2E)-enoyl-[ACP] + NADH + H(+). It participates in lipid metabolism; fatty acid biosynthesis. In terms of biological role, involved in the final reduction of the elongation cycle of fatty acid synthesis (FAS II). Catalyzes the reduction of a carbon-carbon double bond in an enoyl moiety that is covalently linked to an acyl carrier protein (ACP). The protein is Enoyl-[acyl-carrier-protein] reductase [NADH] of Colwellia psychrerythraea (strain 34H / ATCC BAA-681) (Vibrio psychroerythus).